The following is a 206-amino-acid chain: FMN-dependent NADH:quinone oxidoreductase 4 (206 aa).

FMN is bound by residues Ser-10 and 136-139 (SSGG).

Belongs to the azoreductase type 1 family. In terms of assembly, homodimer. The cofactor is FMN.

The catalysed reaction is 2 a quinone + NADH + H(+) = 2 a 1,4-benzosemiquinone + NAD(+). The enzyme catalyses N,N-dimethyl-1,4-phenylenediamine + anthranilate + 2 NAD(+) = 2-(4-dimethylaminophenyl)diazenylbenzoate + 2 NADH + 2 H(+). Its function is as follows. Quinone reductase that provides resistance to thiol-specific stress caused by electrophilic quinones. In terms of biological role, also exhibits azoreductase activity. Catalyzes the reductive cleavage of the azo bond in aromatic azo compounds to the corresponding amines. This is FMN-dependent NADH:quinone oxidoreductase 4 from Pseudomonas fluorescens (strain ATCC BAA-477 / NRRL B-23932 / Pf-5).